We begin with the raw amino-acid sequence, 274 residues long: Ubiquinone biosynthesis O-methyltransferase, mitochondrial (274 aa).

Residues 1–30 (MNSMNILNKVKNVKSYTRLVRQGFLSQQRN) constitute a mitochondrion transit peptide. S-adenosyl-L-methionine is bound by residues Arg65, Gly88, Asp109, and Met154. Mg(2+) is bound by residues Glu155, Glu158, and His159.

It belongs to the class I-like SAM-binding methyltransferase superfamily. UbiG/COQ3 family. Component of a multi-subunit COQ enzyme complex, composed of at least coq3, coq4, coq5, coq6, coq7 and coq9. Mg(2+) is required as a cofactor.

Its subcellular location is the mitochondrion inner membrane. The enzyme catalyses 3,4-dihydroxy-5-(all-trans-decaprenyl)benzoate + S-adenosyl-L-methionine = 4-hydroxy-3-methoxy-5-(all-trans-decaprenyl)benzoate + S-adenosyl-L-homocysteine + H(+). The catalysed reaction is a 3-demethylubiquinone + S-adenosyl-L-methionine = a ubiquinone + S-adenosyl-L-homocysteine. It carries out the reaction 3-demethylubiquinol-10 + S-adenosyl-L-methionine = ubiquinol-10 + S-adenosyl-L-homocysteine + H(+). It functions in the pathway cofactor biosynthesis; ubiquinone biosynthesis. In terms of biological role, O-methyltransferase required for two non-consecutive steps during ubiquinone biosynthesis. Catalyzes the 2 O-methylation of 3,4-dihydroxy-5-(all-trans-decaprenyl)benzoic acid into 4-hydroxy-3-methoxy-5-(all-trans-decaprenyl)benzoic acid. Also catalyzes the last step of ubiquinone biosynthesis by mediating methylation of 3-demethylubiquinone into ubiquinone. Also able to mediate the methylation of 3-demethylubiquinol-10 into ubiquinol-10. This Schizosaccharomyces pombe (strain 972 / ATCC 24843) (Fission yeast) protein is Ubiquinone biosynthesis O-methyltransferase, mitochondrial.